Reading from the N-terminus, the 138-residue chain is Putative protein encoded by LINC02912 (138 aa).

The next 2 helical transmembrane spans lie at 32 to 52 (FALSFLIGKMGIIILSVCLIC) and 65 to 85 (CLINVSFSLYSCFIVFVTISQ). The interval 109–138 (SGGQSQHSWPCPERSKNLPQVSKQLRNRAG) is disordered.

The protein resides in the membrane. The sequence is that of Putative protein encoded by LINC02912 from Homo sapiens (Human).